Consider the following 332-residue polypeptide: Ribosomal RNA small subunit methyltransferase C (332 aa).

It belongs to the methyltransferase superfamily. RsmC family. Monomer.

Its subcellular location is the cytoplasm. The enzyme catalyses guanosine(1207) in 16S rRNA + S-adenosyl-L-methionine = N(2)-methylguanosine(1207) in 16S rRNA + S-adenosyl-L-homocysteine + H(+). Specifically methylates the guanine in position 1207 of 16S rRNA in the 30S particle. The polypeptide is Ribosomal RNA small subunit methyltransferase C (Pseudomonas fluorescens (strain ATCC BAA-477 / NRRL B-23932 / Pf-5)).